The sequence spans 181 residues: Bradykinin-potentiating and C-type natriuretic peptides (181 aa).

The N-terminal stretch at 1-23 is a signal peptide; sequence MFVSRLAASGLLLLALLAVSLDG. The propeptide occupies 24–30; that stretch reads KPLQQWS. Q31 bears the Pyrrolidone carboxylic acid mark. A propeptide spanning residues 41 to 43 is cleaved from the precursor; the sequence is LVV. A Pyrrolidone carboxylic acid modification is found at Q44. 2 consecutive propeptides follow at residues 50 to 78 and 90 to 157; these read TQLQ…AALD and GSKA…KGLA. Residues 74 to 153 are disordered; sequence EAALDTPPAG…GGGGGGARRL (80 aa). The segment covering 104 to 114 has biased composition (low complexity); sequence SKGASATSAAS. A compositionally biased stretch (gly residues) spans 140–150; that stretch reads AGGGGGGGGGA. Cysteines 165 and 181 form a disulfide.

It in the N-terminal section; belongs to the bradykinin-potentiating peptide family. The protein in the C-terminal section; belongs to the natriuretic peptide family. Venom gland.

It is found in the secreted. In terms of biological role, bradykinin-potentiating peptide both inhibits the activity of the angiotensin-converting enzyme (ACE) and enhances the action of bradykinin by inhibiting the peptidases that inactivate it. It acts as an indirect hypotensive agent. Functionally, antagonizes the vasodilatory actions of bradykinin at the B2 bradykinin receptor. Has no demonstrable hypotensive activity when injected intravenously in rats. Its function is as follows. has a vasorelaxant activity in rat aortic strips and a diuretic potency in anesthetized rats. May act by activating natriuretic receptors (NPR1 and/or NPR2). This chain is Bradykinin-potentiating and C-type natriuretic peptides, found in Crotalus durissus collilineatus (Brazilian rattlesnake).